The primary structure comprises 418 residues: Queuine tRNA-ribosyltransferase accessory subunit 2 (418 aa).

4 residues coordinate Zn(2+): C325, C327, C330, and H356.

The protein belongs to the queuine tRNA-ribosyltransferase family. QTRT2 subfamily. As to quaternary structure, heterodimer of a catalytic subunit and an accessory subunit. Requires Zn(2+) as cofactor.

It is found in the cytoplasm. In terms of biological role, non-catalytic subunit of the queuine tRNA-ribosyltransferase (TGT) that catalyzes the base-exchange of a guanine (G) residue with queuine (Q) at position 34 (anticodon wobble position) in tRNAs with GU(N) anticodons (tRNA-Asp, -Asn, -His and -Tyr), resulting in the hypermodified nucleoside queuosine (7-(((4,5-cis-dihydroxy-2-cyclopenten-1-yl)amino)methyl)-7-deazaguanosine). The protein is Queuine tRNA-ribosyltransferase accessory subunit 2 of Drosophila yakuba (Fruit fly).